The primary structure comprises 203 residues: Small ribosomal subunit protein uS4 (203 aa).

The 62-residue stretch at 93–154 (RRFDNVVFRA…KSKNMDAVTE (62 aa)) folds into the S4 RNA-binding domain.

The protein belongs to the universal ribosomal protein uS4 family. As to quaternary structure, part of the 30S ribosomal subunit. Contacts protein S5. The interaction surface between S4 and S5 is involved in control of translational fidelity.

Functionally, one of the primary rRNA binding proteins, it binds directly to 16S rRNA where it nucleates assembly of the body of the 30S subunit. Its function is as follows. With S5 and S12 plays an important role in translational accuracy. The sequence is that of Small ribosomal subunit protein uS4 from Prosthecochloris aestuarii (strain DSM 271 / SK 413).